A 241-amino-acid chain; its full sequence is Ribonuclease PH (241 aa).

Phosphate is bound by residues Arg87 and 125–127; that span reads GTR.

It belongs to the RNase PH family. In terms of assembly, homohexameric ring arranged as a trimer of dimers.

It catalyses the reaction tRNA(n+1) + phosphate = tRNA(n) + a ribonucleoside 5'-diphosphate. In terms of biological role, phosphorolytic 3'-5' exoribonuclease that plays an important role in tRNA 3'-end maturation. Removes nucleotide residues following the 3'-CCA terminus of tRNAs; can also add nucleotides to the ends of RNA molecules by using nucleoside diphosphates as substrates, but this may not be physiologically important. Probably plays a role in initiation of 16S rRNA degradation (leading to ribosome degradation) during starvation. The polypeptide is Ribonuclease PH (Salinispora tropica (strain ATCC BAA-916 / DSM 44818 / JCM 13857 / NBRC 105044 / CNB-440)).